A 37-amino-acid polypeptide reads, in one-letter code: Large ribosomal subunit protein bL36 (37 aa).

This sequence belongs to the bacterial ribosomal protein bL36 family.

In Thermobifida fusca (strain YX), this protein is Large ribosomal subunit protein bL36.